A 547-amino-acid chain; its full sequence is Chaperonin GroEL (547 aa).

ATP is bound by residues 30 to 33, Lys-51, 87 to 91, Gly-415, 479 to 481, and Asp-495; these read TLGP, DGTTT, and NAA.

The protein belongs to the chaperonin (HSP60) family. In terms of assembly, forms a cylinder of 14 subunits composed of two heptameric rings stacked back-to-back. Interacts with the co-chaperonin GroES.

It localises to the cytoplasm. The enzyme catalyses ATP + H2O + a folded polypeptide = ADP + phosphate + an unfolded polypeptide.. Its function is as follows. Together with its co-chaperonin GroES, plays an essential role in assisting protein folding. The GroEL-GroES system forms a nano-cage that allows encapsulation of the non-native substrate proteins and provides a physical environment optimized to promote and accelerate protein folding. This chain is Chaperonin GroEL, found in Cupriavidus pinatubonensis (strain JMP 134 / LMG 1197) (Cupriavidus necator (strain JMP 134)).